Reading from the N-terminus, the 534-residue chain is CTP synthase (534 aa).

Positions M1–L265 are amidoligase domain. Position 12 (S12) interacts with CTP. A UTP-binding site is contributed by S12. G13–I18 provides a ligand contact to ATP. Position 53 (Y53) interacts with L-glutamine. D70 is a binding site for ATP. Residues D70 and E140 each coordinate Mg(2+). Residues D147 to E149, K186 to Q191, and K222 contribute to the CTP site. Residues K186 to Q191 and K222 each bind UTP. The Glutamine amidotransferase type-1 domain occupies K289 to E530. G352 lines the L-glutamine pocket. Catalysis depends on C379, which acts as the Nucleophile; for glutamine hydrolysis. L-glutamine contacts are provided by residues L380 to Q383, E403, and R460. Active-site residues include H503 and E505.

The protein belongs to the CTP synthase family. In terms of assembly, homotetramer.

The enzyme catalyses UTP + L-glutamine + ATP + H2O = CTP + L-glutamate + ADP + phosphate + 2 H(+). The catalysed reaction is L-glutamine + H2O = L-glutamate + NH4(+). It carries out the reaction UTP + NH4(+) + ATP = CTP + ADP + phosphate + 2 H(+). Its pathway is pyrimidine metabolism; CTP biosynthesis via de novo pathway; CTP from UDP: step 2/2. Its activity is regulated as follows. Allosterically activated by GTP, when glutamine is the substrate; GTP has no effect on the reaction when ammonia is the substrate. The allosteric effector GTP functions by stabilizing the protein conformation that binds the tetrahedral intermediate(s) formed during glutamine hydrolysis. Inhibited by the product CTP, via allosteric rather than competitive inhibition. Functionally, catalyzes the ATP-dependent amination of UTP to CTP with either L-glutamine or ammonia as the source of nitrogen. Regulates intracellular CTP levels through interactions with the four ribonucleotide triphosphates. The protein is CTP synthase of Methanosarcina mazei (strain ATCC BAA-159 / DSM 3647 / Goe1 / Go1 / JCM 11833 / OCM 88) (Methanosarcina frisia).